A 785-amino-acid chain; its full sequence is MNKRSLRVLEFNKVKEMLKKYAYSSSAKKLVDELVPYDNTYEINNRLEESNEALEILMKKGNPPIEGLCDIGDILQRAKKGGTLTPEQLLKVLGMLTATRRMQEFFKREDQEVSFPKLEDLAYILAPINDLEKEIERSILSEDEVSDNASTTLYNIRRSLKEKNSSVREKINSIVRSNSKYLQDSLYTIRGDRYVIPVKAEYKSSVPGLVHDQSSTGATLFIEPMGLVNLNNEIKELMLKEKAEIDRVLSALSLKVKMNAEHCESNFKILTNLDFIFSKGKYACELNAIKPMVRDDGIFNIMSGRHPLIEKDKVVPLDVVLGDEFDTLMITGPNTGGKTVTLKTVGLLHIMALSGLLIPASSNSSVSFFKEVFADIGDEQSIEQSLSTFSSHLTNIVNIMEYDNRQSLILFDELGGGTDPAEGAALAIAIIENLSSKGAKLIATTHYSELKAYALNKERVENASVEFDINTLRPTYRLLIGVPGKSNAFEISKRIGLGKEVIDCAKNYMSKENLEFEGLIRNLQEKSIIAKKDARDAKVIKDEADNLKKKYEQKLERLEKVKDKAYMDAREEAKKIVANAKDEADEILKAMRELEKLGIGSGGRQRLEEERKKLKDSLEEKEKNLYKMKENDGEVLEKVALGMEAFLPSLNQTVVVISMPDNRGEVQVEAGIMKISVKLKDLRKTKQSKVEKVKKKRELKLHFSKVENRIDLRGLDAEEACYRVDKYLDDAYMGNLGEVTIVHGKGTGILRKAINDMLKRHVHVKNYRLGGYGEGGDGATIVELK.

Residue 332 to 339 (GPNTGGKT) coordinates ATP. A Smr domain is found at 710-785 (IDLRGLDAEE…GDGATIVELK (76 aa)).

Belongs to the DNA mismatch repair MutS family. MutS2 subfamily. In terms of assembly, homodimer. Binds to stalled ribosomes, contacting rRNA.

In terms of biological role, endonuclease that is involved in the suppression of homologous recombination and thus may have a key role in the control of bacterial genetic diversity. Acts as a ribosome collision sensor, splitting the ribosome into its 2 subunits. Detects stalled/collided 70S ribosomes which it binds and splits by an ATP-hydrolysis driven conformational change. Acts upstream of the ribosome quality control system (RQC), a ribosome-associated complex that mediates the extraction of incompletely synthesized nascent chains from stalled ribosomes and their subsequent degradation. Probably generates substrates for RQC. The chain is Endonuclease MutS2 from Clostridium botulinum (strain Alaska E43 / Type E3).